Consider the following 127-residue polypeptide: Large ribosomal subunit protein bL17 (127 aa).

This sequence belongs to the bacterial ribosomal protein bL17 family. As to quaternary structure, part of the 50S ribosomal subunit. Contacts protein L32.

In Fervidobacterium nodosum (strain ATCC 35602 / DSM 5306 / Rt17-B1), this protein is Large ribosomal subunit protein bL17.